Consider the following 29-residue polypeptide: Cyclotide mela-2 (29 aa).

A cross-link (cyclopeptide (Gly-Asp)) is located at residues 1-29; sequence GKPTCGETCFKGKCYTPGCTCSYPLCKKD. 3 cysteine pairs are disulfide-bonded: cysteine 5-cysteine 19, cysteine 9-cysteine 21, and cysteine 14-cysteine 26.

Post-translationally, this is a cyclic peptide. Contains 3 disulfide bonds.

Its function is as follows. Probably participates in a plant defense mechanism (Potential). Binds to and induces leakage in phospholipd membranes, particularly ones containing 1-palmitoyl-2-oleophosphatidylethanolamine (POPE). In vitro, displays cytotoxicity against cultured cells but no hemolytic activity towards fresh erythrocytes. Not active against Gram-negative bacterium E.coli ATCC 25922 or Gram-positive bacterium S.aureus ATCC 25923 up to a concentration of 64 uM. This chain is Cyclotide mela-2, found in Melicytus latifolius (Norfolk Island mahoe).